The chain runs to 358 residues: Pre-mRNA-splicing factor spp2 (358 aa).

2 disordered regions span residues 1–250 (MTDQ…RAVP) and 298–358 (AWNQ…RGDR). Positions 24-40 (KTKKPSRPTHTRRHHAR) are enriched in basic residues. Basic and acidic residues-rich tracts occupy residues 80-137 (LENR…DASR) and 145-160 (RSRDRDHKPKDPKDLQ). The span at 174-185 (NPKSTTTATSSF) shows a compositional bias: polar residues. Basic and acidic residues-rich tracts occupy residues 233–246 (SSHDRDRSPDHSDY) and 309–358 (GDSR…RGDR).

This sequence belongs to the SPP2 family. As to quaternary structure, associated with the spliceosome.

It is found in the nucleus. Involved in spliceosome maturation and the first step of pre-mRNA splicing. In Neurospora crassa (strain ATCC 24698 / 74-OR23-1A / CBS 708.71 / DSM 1257 / FGSC 987), this protein is Pre-mRNA-splicing factor spp2 (msp-40).